The primary structure comprises 139 residues: Nucleoside diphosphate kinase (139 aa).

ATP-binding residues include Lys11, Phe59, Arg87, Thr93, Arg104, and Asn114. The active-site Pros-phosphohistidine intermediate is the His117.

The protein belongs to the NDK family. As to quaternary structure, homotetramer. Requires Mg(2+) as cofactor.

The protein localises to the cytoplasm. It catalyses the reaction a 2'-deoxyribonucleoside 5'-diphosphate + ATP = a 2'-deoxyribonucleoside 5'-triphosphate + ADP. It carries out the reaction a ribonucleoside 5'-diphosphate + ATP = a ribonucleoside 5'-triphosphate + ADP. Functionally, major role in the synthesis of nucleoside triphosphates other than ATP. The ATP gamma phosphate is transferred to the NDP beta phosphate via a ping-pong mechanism, using a phosphorylated active-site intermediate. This is Nucleoside diphosphate kinase from Wolbachia sp. subsp. Drosophila simulans (strain wRi).